The sequence spans 92 residues: Putative membrane protein insertion efficiency factor (92 aa).

This sequence belongs to the UPF0161 family.

The protein resides in the cell inner membrane. Could be involved in insertion of integral membrane proteins into the membrane. The polypeptide is Putative membrane protein insertion efficiency factor (Synechococcus sp. (strain CC9605)).